We begin with the raw amino-acid sequence, 413 residues long: Tyrosine--tRNA ligase (413 aa).

Positions 59–68 match the 'HIGH' region motif; sequence PTAPDIHIGH. The short motif at 243–247 is the 'KMSKS' region element; sequence KMSKS. Lys246 provides a ligand contact to ATP. The 61-residue stretch at 351 to 411 folds into the S4 RNA-binding domain; sequence LAIGQLLKQA…GKRRFARVTL (61 aa).

The protein belongs to the class-I aminoacyl-tRNA synthetase family. TyrS type 2 subfamily. As to quaternary structure, homodimer.

It is found in the cytoplasm. The catalysed reaction is tRNA(Tyr) + L-tyrosine + ATP = L-tyrosyl-tRNA(Tyr) + AMP + diphosphate + H(+). Its function is as follows. Catalyzes the attachment of tyrosine to tRNA(Tyr) in a two-step reaction: tyrosine is first activated by ATP to form Tyr-AMP and then transferred to the acceptor end of tRNA(Tyr). In Burkholderia lata (strain ATCC 17760 / DSM 23089 / LMG 22485 / NCIMB 9086 / R18194 / 383), this protein is Tyrosine--tRNA ligase.